The following is a 471-amino-acid chain: Glutamyl-tRNA(Gln) amidotransferase subunit A, mitochondrial (471 aa).

Residues K64 and S141 each act as charge relay system in the active site. S165 (acyl-ester intermediate) is an active-site residue.

This sequence belongs to the amidase family. GatA subfamily. In terms of assembly, subunit of the heterotrimeric GatCAB amidotransferase (AdT) complex, composed of A, B and C subunits.

The protein resides in the mitochondrion. It catalyses the reaction L-glutamyl-tRNA(Gln) + L-glutamine + ATP + H2O = L-glutaminyl-tRNA(Gln) + L-glutamate + ADP + phosphate + H(+). In terms of biological role, allows the formation of correctly charged Gln-tRNA(Gln) through the transamidation of misacylated Glu-tRNA(Gln) in the mitochondria. The reaction takes place in the presence of glutamine and ATP through an activated gamma-phospho-Glu-tRNA(Gln). This is Glutamyl-tRNA(Gln) amidotransferase subunit A, mitochondrial from Schizosaccharomyces pombe (strain 972 / ATCC 24843) (Fission yeast).